The sequence spans 1073 residues: PX domain-containing protein LEC1 (1073 aa).

The segment covering 218-228 (CTESVDNDKSS) has biased composition (basic and acidic residues). The interval 218 to 240 (CTESVDNDKSSKSTPTSSPKSHA) is disordered. The span at 229–238 (KSTPTSSPKS) shows a compositional bias: low complexity. Positions 273–506 (LFSKLSLGVP…RFFLSGPNLD (234 aa)) constitute a PX domain. A phosphoserine mark is found at S310 and S451. Positions 431-456 (IKEEDNIDEDEYEEEGEGEESDFDEY) are disordered. The segment covering 432–453 (KEEDNIDEDEYEEEGEGEESDF) has biased composition (acidic residues).

The protein resides in the endoplasmic reticulum membrane. Its subcellular location is the lipid droplet. Functionally, phosphoinositide-binding protein that plays a role in regulation of ergosterol distribution in the cell. Facilitates ergosterol transport between plasma membrane and lipid droplets. This chain is PX domain-containing protein LEC1, found in Saccharomyces cerevisiae (strain ATCC 204508 / S288c) (Baker's yeast).